Reading from the N-terminus, the 91-residue chain is Large ribosomal subunit protein eL37 (91 aa).

Zn(2+) is bound by residues C19, C22, C34, and C37. The segment at C19–C37 adopts a C4-type zinc-finger fold.

The protein belongs to the eukaryotic ribosomal protein eL37 family. Requires Zn(2+) as cofactor.

Its function is as follows. Binds to the 23S rRNA. The protein is Large ribosomal subunit protein eL37 (rpl37) of Dictyostelium discoideum (Social amoeba).